A 308-amino-acid chain; its full sequence is Malonate utilization transcriptional regulator (308 aa).

Residues 9 to 66 (ITFRKLSVFMMFMAKGNIARTAEAMKLSSVSVHRALHTLEEGVGCPLFVHKGRNLLPL) form the HTH lysR-type domain. A DNA-binding region (H-T-H motif) is located at residues 26–45 (IARTAEAMKLSSVSVHRALH).

Belongs to the LysR transcriptional regulatory family.

Its function is as follows. Transcriptional regulator of the mau genes for malonate utilization. In Klebsiella pneumoniae, this protein is Malonate utilization transcriptional regulator (mauR).